We begin with the raw amino-acid sequence, 316 residues long: 4-diphosphocytidyl-2-C-methyl-D-erythritol kinase (316 aa).

The active site involves K23. Position 108 to 118 (108 to 118 (PVAGGMAGGSA)) interacts with ATP. D150 is a catalytic residue.

The protein belongs to the GHMP kinase family. IspE subfamily.

The catalysed reaction is 4-CDP-2-C-methyl-D-erythritol + ATP = 4-CDP-2-C-methyl-D-erythritol 2-phosphate + ADP + H(+). The protein operates within isoprenoid biosynthesis; isopentenyl diphosphate biosynthesis via DXP pathway; isopentenyl diphosphate from 1-deoxy-D-xylulose 5-phosphate: step 3/6. Functionally, catalyzes the phosphorylation of the position 2 hydroxy group of 4-diphosphocytidyl-2C-methyl-D-erythritol. This Mycobacterium avium (strain 104) protein is 4-diphosphocytidyl-2-C-methyl-D-erythritol kinase.